The primary structure comprises 508 residues: MSVELWQQCVELLRDELPAQQFNTWIRPLQVEAEGDELRVYAPNRFVLDWVNEKYLGRLLELLGEHGNGLAPALSLLIGSRRSSAPRAAPNAPVSAAVAATMAQQTQQAAQVVVPSEPIVVPVAEPVLSEVEEPSSRDSFDSMSDSGSVPAASGRTEQRTVQVEGALKHTSYLNRTFTFETFVEGKSNQLARAAAWQVADNPKHGYNPLFLYGGVGLGKTHLMHAVGNHLLKKNPNAKVVYLHSERFVADMVKALQLNAINEFKRFYRSVDALLIDDIQFFARKERSQEEFFHTFNALLEGGQQVILTSDRYPKEIEGLEERLKSRFGWGLTVAVEPPELETRVAILMKKADQAKVELPHDAAFFIAQRIRSNVRELEGALKRVIAHSHFMGRDITIELIRESLKDLLALQDKLVSVDNIQRTVAEYYKIKISDLLSKRRSRSVARPRQVAMALSKELTNHSLPEIGDMFGGRDHTTVLHACRKINELKESDADIREDYKNLLRTLTT.

A domain I, interacts with DnaA modulators region spans residues M1–P90. A domain II region spans residues N91–S171. Residues E130–T160 form a disordered region. The tract at residues Y172–S388 is domain III, AAA+ region. G216, G218, K219, and T220 together coordinate ATP. Residues H389–T508 form a domain IV, binds dsDNA region.

This sequence belongs to the DnaA family. As to quaternary structure, oligomerizes as a right-handed, spiral filament on DNA at oriC.

It localises to the cytoplasm. Its function is as follows. Plays an essential role in the initiation and regulation of chromosomal replication. ATP-DnaA binds to the origin of replication (oriC) to initiate formation of the DNA replication initiation complex once per cell cycle. Binds the DnaA box (a 9 base pair repeat at the origin) and separates the double-stranded (ds)DNA. Forms a right-handed helical filament on oriC DNA; dsDNA binds to the exterior of the filament while single-stranded (ss)DNA is stabiized in the filament's interior. The ATP-DnaA-oriC complex binds and stabilizes one strand of the AT-rich DNA unwinding element (DUE), permitting loading of DNA polymerase. After initiation quickly degrades to an ADP-DnaA complex that is not apt for DNA replication. Binds acidic phospholipids. This Pseudomonas entomophila (strain L48) protein is Chromosomal replication initiator protein DnaA.